Consider the following 223-residue polypeptide: Adenylate kinase (223 aa).

10-15 is a binding site for ATP; the sequence is GSGKGT. The tract at residues 30–59 is NMP; the sequence is ESGAIFREHIGGGTELGKQAKAFIERGDLV. AMP-binding positions include S31, R36, 57-59, 84-87, and Q91; these read DLV and GFPR. The interval 125-164 is LID; sequence GRRLCKNDNNHPNNIFIDAIKPNGDVCRVCGGELSARSDD. ATP is bound at residue R126. Residues R161 and R173 each contribute to the AMP site. An ATP-binding site is contributed by G209.

Belongs to the adenylate kinase family. Monomer.

The protein localises to the cytoplasm. It carries out the reaction AMP + ATP = 2 ADP. Its pathway is purine metabolism; AMP biosynthesis via salvage pathway; AMP from ADP: step 1/1. Functionally, catalyzes the reversible transfer of the terminal phosphate group between ATP and AMP. Plays an important role in cellular energy homeostasis and in adenine nucleotide metabolism. The polypeptide is Adenylate kinase (Nitratidesulfovibrio vulgaris (strain ATCC 29579 / DSM 644 / CCUG 34227 / NCIMB 8303 / VKM B-1760 / Hildenborough) (Desulfovibrio vulgaris)).